We begin with the raw amino-acid sequence, 360 residues long: Protein MGF 360-2L (360 aa).

It belongs to the asfivirus MGF 360 family.

Plays a role in virus cell tropism, and may be required for efficient virus replication in macrophages. The polypeptide is Protein MGF 360-2L (Ornithodoros (relapsing fever ticks)).